The primary structure comprises 199 residues: Protein-methionine-sulfoxide reductase heme-binding subunit MsrQ (199 aa).

Helical transmembrane passes span Ile8 to Trp28, Phe54 to Ile74, Leu82 to Ile102, Pro116 to Thr136, Leu149 to Val169, and Ile171 to Tyr191.

The protein belongs to the MsrQ family. In terms of assembly, heterodimer of a catalytic subunit (MsrP) and a heme-binding subunit (MsrQ). FMN serves as cofactor. The cofactor is heme b.

It localises to the cell inner membrane. Part of the MsrPQ system that repairs oxidized periplasmic proteins containing methionine sulfoxide residues (Met-O), using respiratory chain electrons. Thus protects these proteins from oxidative-stress damage caused by reactive species of oxygen and chlorine generated by the host defense mechanisms. MsrPQ is essential for the maintenance of envelope integrity under bleach stress, rescuing a wide series of structurally unrelated periplasmic proteins from methionine oxidation. MsrQ provides electrons for reduction to the reductase catalytic subunit MsrP, using the quinone pool of the respiratory chain. The protein is Protein-methionine-sulfoxide reductase heme-binding subunit MsrQ of Klebsiella pneumoniae (strain 342).